The chain runs to 244 residues: Phosphoadenosine 5'-phosphosulfate reductase (244 aa).

The active-site Nucleophile; cysteine thiosulfonate intermediate is C239.

This sequence belongs to the PAPS reductase family. CysH subfamily.

The protein localises to the cytoplasm. It catalyses the reaction [thioredoxin]-disulfide + sulfite + adenosine 3',5'-bisphosphate + 2 H(+) = [thioredoxin]-dithiol + 3'-phosphoadenylyl sulfate. The protein operates within sulfur metabolism; hydrogen sulfide biosynthesis; sulfite from sulfate: step 3/3. Functionally, catalyzes the formation of sulfite from phosphoadenosine 5'-phosphosulfate (PAPS) using thioredoxin as an electron donor. The protein is Phosphoadenosine 5'-phosphosulfate reductase of Yersinia enterocolitica serotype O:8 / biotype 1B (strain NCTC 13174 / 8081).